Here is a 464-residue protein sequence, read N- to C-terminus: 3-isopropylmalate dehydratase large subunit (464 aa).

C345, C405, and C408 together coordinate [4Fe-4S] cluster.

It belongs to the aconitase/IPM isomerase family. LeuC type 1 subfamily. In terms of assembly, heterodimer of LeuC and LeuD. The cofactor is [4Fe-4S] cluster.

The enzyme catalyses (2R,3S)-3-isopropylmalate = (2S)-2-isopropylmalate. It participates in amino-acid biosynthesis; L-leucine biosynthesis; L-leucine from 3-methyl-2-oxobutanoate: step 2/4. Catalyzes the isomerization between 2-isopropylmalate and 3-isopropylmalate, via the formation of 2-isopropylmaleate. The sequence is that of 3-isopropylmalate dehydratase large subunit from Bacteroides fragilis (strain ATCC 25285 / DSM 2151 / CCUG 4856 / JCM 11019 / LMG 10263 / NCTC 9343 / Onslow / VPI 2553 / EN-2).